The chain runs to 428 residues: MRVVILGSGVVGVASAYYLARAGHEVTVIDREAGPALDTSFANAGQISPGYAAPWAAPGVPLKAVKWMFEKHAPLAIRLDGTRFQLQWMWQMLRNCTPERYAVNKGRMVRLAEYSRDCLQALRADTGIEYEGRTGGTLQLFRSQQQLDGAAKDIAVLREANVPFELLSPAELKNAEPALAAVSHKLTGGLRLPGDETGDCQLFTTRLAALAESLGVKFRYNTPIDALAIAGGKIAGVQCGSETVRADAYVVALGSYSTNFVSKLMKIPVYPLKGYSITAPIVNEAAAPVSTVLDETYKIAITRFDQRIRVGGMAEIVGFDKKLRAARRETLEMCVNDLFPGGGDTSKATFWTGLRPMTPDGTPIVGRTPVSNLFMNTGHGTLGWTMSCGSGQLLADLISGKKPAIQADDLSVHRYLNEVAGQTRPAYA.

FAD is bound at residue 3-17 (VVILGSGVVGVASAY).

Belongs to the DadA oxidoreductase family. It depends on FAD as a cofactor.

The catalysed reaction is a D-alpha-amino acid + A + H2O = a 2-oxocarboxylate + AH2 + NH4(+). Its pathway is amino-acid degradation; D-alanine degradation; NH(3) and pyruvate from D-alanine: step 1/1. Its function is as follows. Oxidative deamination of D-amino acids. In Burkholderia vietnamiensis (strain G4 / LMG 22486) (Burkholderia cepacia (strain R1808)), this protein is D-amino acid dehydrogenase.